The primary structure comprises 102 residues: uncharacterized protein (102 aa).

2 helical membrane passes run 33–55 (VLEL…LVVL) and 57–79 (VVGV…VVVA).

It localises to the membrane. This is an uncharacterized protein from Saccharomyces cerevisiae (strain ATCC 204508 / S288c) (Baker's yeast).